Reading from the N-terminus, the 547-residue chain is MAAKDVKFGNDARVKMLKGVNVLADAVKVTLGPKGRNVVLDKAFGAPTITKDGVSVAREIELEDKFENMGAQMVKEVASKANDAAGDGTTTATVLAQAIVNEGLKAVAAGMNPMDLKRGIDKAVAAVVEELKSLSKPCETSKEIEQVGTISANSDSTVGKLIAQAMEKVGKEGVITVEDGTGLEDALDVVEGMQFDRGYLSPYFINKPEAGTVELENPYILLVDKKISNIREILPVLEAVAKAGKPLLIIAEDIEGEALATLVVNTMRGIVKVAAVKAPGFGDRRKAMLQDIAILTAGTVISEEIGMELEKATIEELGQAKRVVISKDNTTIIDGVGDEVQIKARVAQIRQQIEDSTSDYDKEKLQERVAKLAGGVAVIKVGAATEVEMKEKKDRVDDALHATRAAVEEGIIAGGGVALVRAASKVADVVKGDNEEQNVGIRLALRAMEAPLRQIVTNAGEEASVVARNVKDGNGNYGYNAATEQYGDMLEMGILDPTKVTRSALQFAASIAGLMITTECMVTDLPKEEKADLGAGMGGMGGMGGMM.

Residues 30-33 (TLGP), Lys-51, 87-91 (DGTTT), Gly-415, 480-482 (NAA), and Asp-496 contribute to the ATP site.

It belongs to the chaperonin (HSP60) family. As to quaternary structure, forms a cylinder of 14 subunits composed of two heptameric rings stacked back-to-back. Interacts with the co-chaperonin GroES.

The protein resides in the cytoplasm. It carries out the reaction ATP + H2O + a folded polypeptide = ADP + phosphate + an unfolded polypeptide.. Functionally, together with its co-chaperonin GroES, plays an essential role in assisting protein folding. The GroEL-GroES system forms a nano-cage that allows encapsulation of the non-native substrate proteins and provides a physical environment optimized to promote and accelerate protein folding. The polypeptide is Chaperonin GroEL (Glaesserella parasuis serovar 5 (strain SH0165) (Haemophilus parasuis)).